A 167-amino-acid polypeptide reads, in one-letter code: Large ribosomal subunit protein uL10 (167 aa).

The protein belongs to the universal ribosomal protein uL10 family. In terms of assembly, part of the ribosomal stalk of the 50S ribosomal subunit. The N-terminus interacts with L11 and the large rRNA to form the base of the stalk. The C-terminus forms an elongated spine to which L12 dimers bind in a sequential fashion forming a multimeric L10(L12)X complex.

Forms part of the ribosomal stalk, playing a central role in the interaction of the ribosome with GTP-bound translation factors. This is Large ribosomal subunit protein uL10 from Alkaliphilus oremlandii (strain OhILAs) (Clostridium oremlandii (strain OhILAs)).